Consider the following 46-residue polypeptide: Protein PsbN (46 aa).

The helical transmembrane segment at 5 to 27 threads the bilayer; the sequence is TLVTLFVSGLLMSFTGYALYTAF.

It belongs to the PsbN family.

The protein localises to the plastid membrane. Functionally, may play a role in photosystem I and II biogenesis. The chain is Protein PsbN from Cuscuta obtusiflora (Peruvian dodder).